Here is a 272-residue protein sequence, read N- to C-terminus: Insulin-like growth factor-binding protein 1 (272 aa).

The signal sequence occupies residues 1–25; it reads MPEVPAAGLWPFLLLLAVQVSTVAS. The 82-residue stretch at 28 to 109 folds into the IGFBP N-terminal domain; that stretch reads QPWHCAPCSA…TRGQGACVPE (82 aa). Intrachain disulfides connect C32/C59, C35/C61, C43/C62, C50/C65, and C73/C86. A phosphoserine mark is found at S139, S157, and S169. Residue T170 is modified to Phosphothreonine. Y171 carries the phosphotyrosine modification. Positions 186–264 constitute a Thyroglobulin type-1 domain; sequence KQPCRRELYK…SLEIRGDPNC (79 aa). 3 disulfide bridges follow: C189–C219, C230–C241, and C243–C264. S255 is subject to Phosphoserine. Positions 259–261 match the Cell attachment site motif; it reads RGD.

In terms of assembly, binds equally well IGF1 and IGF2. Interacts with integrin ITGA5:ITGB1. Interacts with VHL; this interaction inhibits HIF1A degradation.

Its subcellular location is the secreted. Its function is as follows. Multifunctional protein that plays a critical role in regulating the availability of IGFs such as IGF1 and IGF2 to their receptors and thereby regulates IGF-mediated cellular processes including cell migration, proliferation, differentiation or apoptosis in a cell-type specific manner. Also plays a positive role in cell migration by interacting with integrin ITGA5:ITGB1 through its RGD motif. Mechanistically, binding to integrins leads to activation of focal adhesion kinase/PTK2 and stimulation of the mitogen-activated protein kinase (MAPK) pathway. Regulates cardiomyocyte apoptosis by suppressing HIF-1alpha/HIF1A degradation through ubiquitination. The chain is Insulin-like growth factor-binding protein 1 (IGFBP1) from Ictidomys tridecemlineatus (Thirteen-lined ground squirrel).